Consider the following 457-residue polypeptide: tRNA modification GTPase MnmE (457 aa).

(6S)-5-formyl-5,6,7,8-tetrahydrofolate-binding residues include Arg-25, Glu-87, and Arg-126. Residues 223-377 (GIATAIIGRP…IEEKINQLFF (155 aa)) enclose the TrmE-type G domain. Asn-233 is a K(+) binding site. Residues 233-238 (NVGKSS), 252-258 (TDIAGTT), and 277-280 (DTAG) each bind GTP. Ser-237 provides a ligand contact to Mg(2+). Residues Thr-252, Ile-254, and Thr-257 each contribute to the K(+) site. Thr-258 contributes to the Mg(2+) binding site. Lys-457 is a binding site for (6S)-5-formyl-5,6,7,8-tetrahydrofolate.

It belongs to the TRAFAC class TrmE-Era-EngA-EngB-Septin-like GTPase superfamily. TrmE GTPase family. In terms of assembly, homodimer. Heterotetramer of two MnmE and two MnmG subunits. Requires K(+) as cofactor.

It localises to the cytoplasm. In terms of biological role, exhibits a very high intrinsic GTPase hydrolysis rate. Involved in the addition of a carboxymethylaminomethyl (cmnm) group at the wobble position (U34) of certain tRNAs, forming tRNA-cmnm(5)s(2)U34. The protein is tRNA modification GTPase MnmE of Streptococcus suis (strain 98HAH33).